Consider the following 334-residue polypeptide: Glutamyl-tRNA reductase (334 aa).

Substrate contacts are provided by residues 49–52, serine 107, 112–114, and glutamine 118; these read TCNR and EDQ. Cysteine 50 functions as the Nucleophile in the catalytic mechanism. 186-191 lines the NADP(+) pocket; it reads GNGEMG.

The protein belongs to the glutamyl-tRNA reductase family. Homodimer.

The enzyme catalyses (S)-4-amino-5-oxopentanoate + tRNA(Glu) + NADP(+) = L-glutamyl-tRNA(Glu) + NADPH + H(+). It participates in porphyrin-containing compound metabolism; protoporphyrin-IX biosynthesis; 5-aminolevulinate from L-glutamyl-tRNA(Glu): step 1/2. Functionally, catalyzes the NADPH-dependent reduction of glutamyl-tRNA(Glu) to glutamate 1-semialdehyde (GSA). The chain is Glutamyl-tRNA reductase from Alkaliphilus oremlandii (strain OhILAs) (Clostridium oremlandii (strain OhILAs)).